We begin with the raw amino-acid sequence, 368 residues long: Phosphoserine aminotransferase (368 aa).

Residue Arg44 coordinates L-glutamate. Pyridoxal 5'-phosphate is bound by residues 78–79 (AT), Trp104, Thr157, Asp179, and Gln202. Lys203 carries the N6-(pyridoxal phosphate)lysine modification. Position 244–245 (244–245 (NT)) interacts with pyridoxal 5'-phosphate.

Belongs to the class-V pyridoxal-phosphate-dependent aminotransferase family. SerC subfamily. In terms of assembly, homodimer. The cofactor is pyridoxal 5'-phosphate.

It is found in the cytoplasm. It catalyses the reaction O-phospho-L-serine + 2-oxoglutarate = 3-phosphooxypyruvate + L-glutamate. The catalysed reaction is 4-(phosphooxy)-L-threonine + 2-oxoglutarate = (R)-3-hydroxy-2-oxo-4-phosphooxybutanoate + L-glutamate. The protein operates within amino-acid biosynthesis; L-serine biosynthesis; L-serine from 3-phospho-D-glycerate: step 2/3. It participates in cofactor biosynthesis; pyridoxine 5'-phosphate biosynthesis; pyridoxine 5'-phosphate from D-erythrose 4-phosphate: step 3/5. Its function is as follows. Catalyzes the reversible conversion of 3-phosphohydroxypyruvate to phosphoserine and of 3-hydroxy-2-oxo-4-phosphonooxybutanoate to phosphohydroxythreonine. The protein is Phosphoserine aminotransferase of Neisseria meningitidis serogroup B (strain ATCC BAA-335 / MC58).